Here is a 1155-residue protein sequence, read N- to C-terminus: ATP-dependent helicase/deoxyribonuclease subunit B (1155 aa).

The UvrD-like helicase ATP-binding domain maps to 1–300; that stretch reads MSLRFIVGRA…AHLEKYYFRH (300 aa). 8–15 contacts ATP; sequence GRAGSGKS. Positions 280–590 constitute a UvrD-like helicase C-terminal domain; it reads TPVRFQKDSA…VVGTLERSRN (311 aa). [4Fe-4S] cluster is bound by residues C792, C1111, C1114, and C1120.

It belongs to the helicase family. AddB/RexB type 1 subfamily. As to quaternary structure, heterodimer of AddA and AddB. It depends on Mg(2+) as a cofactor. [4Fe-4S] cluster serves as cofactor.

Its function is as follows. The heterodimer acts as both an ATP-dependent DNA helicase and an ATP-dependent, dual-direction single-stranded exonuclease. Recognizes the chi site generating a DNA molecule suitable for the initiation of homologous recombination. The AddB subunit has 5' -&gt; 3' nuclease activity but not helicase activity. The chain is ATP-dependent helicase/deoxyribonuclease subunit B from Desulforamulus reducens (strain ATCC BAA-1160 / DSM 100696 / MI-1) (Desulfotomaculum reducens).